A 126-amino-acid polypeptide reads, in one-letter code: Small ribosomal subunit protein bS6 (126 aa).

The interval 107–126 is disordered; the sequence is RDRERGERSERPRDDFAPAA.

The protein belongs to the bacterial ribosomal protein bS6 family.

In terms of biological role, binds together with bS18 to 16S ribosomal RNA. This is Small ribosomal subunit protein bS6 from Caulobacter sp. (strain K31).